The primary structure comprises 169 residues: Monothiol glutaredoxin-S15, mitochondrial (169 aa).

Residues 1-37 constitute a mitochondrion transit peptide; the sequence is MAASLSSRLIKGIANLKAVRSSRLTSASVYQNGMMRF. Residues 38–61 form a disordered region; the sequence is SSTVPSDSDTHDDFKPTQKVPPDS. A Glutaredoxin domain is found at 66–168; sequence KDIVENDVKD…QKLKDVSGNQ (103 aa). Residue lysine 83 participates in glutathione binding. Cysteine 91 contributes to the [2Fe-2S] cluster binding site. Residues lysine 120, phenylalanine 132, and 145 to 146 contribute to the glutathione site; that span reads SD.

It belongs to the glutaredoxin family. CGFS subfamily. In terms of assembly, [2Fe-2S]-bridged holo-homodimer. Interacts in vitro with SUFE1, BOLA1, BOLA2 and BOLA4. Interacts in vivo only with BOLA4.

Its subcellular location is the mitochondrion. Functionally, may only reduce GSH-thiol disulfides, but not protein disulfides. Participates probably to the maturation of iron-sulfur proteins and to the regulation of the redox state of the BOLA proteins. This Arabidopsis thaliana (Mouse-ear cress) protein is Monothiol glutaredoxin-S15, mitochondrial.